A 1176-amino-acid polypeptide reads, in one-letter code: DNA-directed RNA polymerase subunit beta (1176 aa).

A compositionally biased stretch (polar residues) spans 13–30 (TDASLHQGRPQSSSNSSV). The tract at residues 13–35 (TDASLHQGRPQSSSNSSVPGAPN) is disordered.

The protein belongs to the RNA polymerase beta chain family. The RNAP catalytic core consists of 2 alpha, 1 beta, 1 beta' and 1 omega subunit. When a sigma factor is associated with the core the holoenzyme is formed, which can initiate transcription.

The catalysed reaction is RNA(n) + a ribonucleoside 5'-triphosphate = RNA(n+1) + diphosphate. Functionally, DNA-dependent RNA polymerase catalyzes the transcription of DNA into RNA using the four ribonucleoside triphosphates as substrates. The polypeptide is DNA-directed RNA polymerase subunit beta (Mycobacterium marinum (strain ATCC BAA-535 / M)).